The sequence spans 201 residues: Oligoribonuclease (201 aa).

The Exonuclease domain occupies 20 to 183 (LVWLDMEMTG…ADIHESIDEL (164 aa)). Y141 is an active-site residue.

The protein belongs to the oligoribonuclease family.

It is found in the cytoplasm. Its function is as follows. 3'-to-5' exoribonuclease specific for small oligoribonucleotides. The polypeptide is Oligoribonuclease (Burkholderia pseudomallei (strain 1106a)).